The following is an 81-amino-acid chain: Exodeoxyribonuclease 7 small subunit (81 aa).

Belongs to the XseB family. Heterooligomer composed of large and small subunits.

It is found in the cytoplasm. The enzyme catalyses Exonucleolytic cleavage in either 5'- to 3'- or 3'- to 5'-direction to yield nucleoside 5'-phosphates.. Bidirectionally degrades single-stranded DNA into large acid-insoluble oligonucleotides, which are then degraded further into small acid-soluble oligonucleotides. This chain is Exodeoxyribonuclease 7 small subunit, found in Ruegeria sp. (strain TM1040) (Silicibacter sp.).